An 867-amino-acid chain; its full sequence is DNA mismatch repair protein MutS (867 aa).

609–616 (GPNMSGKS) lines the ATP pocket.

Belongs to the DNA mismatch repair MutS family.

Its function is as follows. This protein is involved in the repair of mismatches in DNA. It is possible that it carries out the mismatch recognition step. This protein has a weak ATPase activity. The chain is DNA mismatch repair protein MutS from Latilactobacillus sakei subsp. sakei (strain 23K) (Lactobacillus sakei subsp. sakei).